The following is a 130-amino-acid chain: Small ribosomal subunit protein uS9 (130 aa).

It belongs to the universal ribosomal protein uS9 family.

This Onion yellows phytoplasma (strain OY-M) protein is Small ribosomal subunit protein uS9.